A 297-amino-acid polypeptide reads, in one-letter code: Lysenin (297 aa).

The interval 10–33 is N-terminal cap domain; the sequence is EQIEVDVVAVWKEGYVYENRGSTS. Positions 34-107 are beta-hairpin domain; it reads VDQKITITKG…SKVIEHTITI (74 aa). The interval 108-156 is N-terminal cap domain; it reads PPTSKFTRWQLNADVGGADIEYMYLIDEVTPIGGTQSIPQVITSRAKII. The tract at residues 157–297 is C-terminal receptor-binding domain; it reads VGRQIILGKT…EDKWILEVVG (141 aa). An N-(acyl)-sphingosylphosphocholine-binding residues include K185, S227, Y233, and Y282. An intrachain disulfide couples C272 to C283.

Belongs to the lysenin family. In terms of assembly, binds to sphingomyelin as a monomer by using its C-terminal domain. Forms a nonamer when sphingomyelin/lysenin ratio is lower than ca 500. Oligomerization, but not binding, is influenced by the fluidity of sphingomyelin. As to expression, expressed by coelomocytes.

The protein localises to the secreted. It localises to the target cell membrane. Pore-forming toxin that defensively acts against parasitic microorganisms by forming pores in sphingomyelin-containing membranes. Has hemolytic activity and is also cytotoxic to spermatozoa of some species of invertebrates and many species of vertebrates and to amphibian larvae, guinea pig polymorphonuclear leukocytes, chicken fibroblasts, normal spleen cells and various tumor cells. Is lethal for various species of reptiles, amphibian, birds and mammals. Induces smooth muscle contraction. It binds sphingomyelin and induces hemolysis in the same manner as lysenin-related protein 2, and is 10-fold more effective than lysenin-related protein 1. The protein is Lysenin of Eisenia fetida (Red wiggler worm).